The primary structure comprises 408 residues: CST complex subunit STN1 (408 aa).

The interval 8 to 195 (MQCESSPKEE…KVYDQPFRNP (188 aa)) is interaction with CTC1. The OB DNA-binding region spans 64–165 (VDIMGAVISV…EICATIYYKV (102 aa)). 2 winged helix-turn-helix (wHTH) regions span residues 201–304 (EALN…YVTS) and 305–408 (KDKD…YTAF).

The protein belongs to the STN1 family. As to quaternary structure, component of the CST complex, composed of TEN1/C17orf106, CTC1/C17orf68 and STN1; in the complex interacts directly with TEN1 and CTC1. Interacts with ACD/TPP1, POT1 and POLA1.

It is found in the nucleus. The protein resides in the chromosome. The protein localises to the telomere. Functionally, component of the CST complex proposed to act as a specialized replication factor promoting DNA replication under conditions of replication stress or natural replication barriers such as the telomere duplex. The CST complex binds single-stranded DNA with high affinity in a sequence-independent manner, while isolated subunits bind DNA with low affinity by themselves. Initially the CST complex has been proposed to protect telomeres from DNA degradation. However, the CST complex has been shown to be involved in several aspects of telomere replication. The CST complex inhibits telomerase and is involved in telomere length homeostasis; it is proposed to bind to newly telomerase-synthesized 3' overhangs and to terminate telomerase action implicating the association with the ACD:POT1 complex thus interfering with its telomerase stimulation activity. The CST complex is also proposed to be involved in fill-in synthesis of the telomeric C-strand probably implicating recruitment and activation of DNA polymerase alpha. The CST complex facilitates recovery from many forms of exogenous DNA damage; seems to be involved in the re-initiation of DNA replication at repaired forks and/or dormant origins. Required for efficicient replication of the duplex region of the telomere. Promotes efficient replication of lagging-strand telomeres. Promotes general replication start following replication-fork stalling implicating new origin firing. May be in involved in C-strand fill-in during late S/G2 phase independent of its role in telomere duplex replication. The protein is CST complex subunit STN1 of Rattus norvegicus (Rat).